The primary structure comprises 357 residues: Protein MGF 360-14L (357 aa).

This sequence belongs to the asfivirus MGF 360 family. Interacts with host IRF3 and TRIM21; these interactions mediates degradation of IRF3 through TRIM21 and ubiquitin-meditated proteolysis.

It localises to the host cytoplasm. Its function is as follows. Plays a role in virus cell tropism, and may be required for efficient virus replication in macrophages. Also inhibits the host cGAS/STING-mediated type I interferon production by inducing host IRF3 degradation through the proteasome pathway. The sequence is that of Protein MGF 360-14L from Ornithodoros (relapsing fever ticks).